We begin with the raw amino-acid sequence, 461 residues long: Probable tubulin polyglutamylase TTLL9 (461 aa).

Positions 1–10 (MSRQKNQNSK) are enriched in polar residues. The interval 1–20 (MSRQKNQNSKGHGVSKGKER) is disordered. Residues 22 to 402 (QRTLIRFKTT…EARLTGKEKR (381 aa)) enclose the TTL domain. ATP-binding positions include lysine 149 and 155–156 (QG). Glutamine 155 contributes to the a protein binding site. The interval 172–208 (RKGTSGKKPTGVETQPARANMNPSGSHDTRSSDDQKD) is disordered. Over residues 198–208 (HDTRSSDDQKD) the composition is skewed to basic and acidic residues. Residues 218–221 (QRYV) and 231–233 (KFD) each bind ATP. Position 257 (arginine 257) interacts with L-glutamate. 276–277 (TN) is a binding site for ATP. L-glutamate is bound at residue lysine 294. Residues aspartate 348, glutamate 361, and asparagine 363 each contribute to the Mg(2+) site. Lysine 379 contacts L-glutamate.

This sequence belongs to the tubulin--tyrosine ligase family. The cofactor is Mg(2+). Highly expressed in brain and testis. Expressed in heart, kidney and lung. In the brain, expressed in ependymal cilia, cortex, corpus callosum and striatum. In the testis, specifically expressed in the seminiferous tubules.

The protein localises to the cytoplasm. Its subcellular location is the cytoskeleton. It localises to the cilium basal body. The protein resides in the flagellum axoneme. It carries out the reaction (L-glutamyl)(n)-gamma-L-glutamyl-L-glutamyl-[protein] + L-glutamate + ATP = (L-glutamyl)(n+1)-gamma-L-glutamyl-L-glutamyl-[protein] + ADP + phosphate + H(+). Probable tubulin polyglutamylase that generates side chains of glutamate on the gamma-carboxyl group of specific glutamate residues within the C-terminal tail of target proteins. Similar to TTLL1, may acquire enzymatic activity only in complex with other proteins as it is most likely lacking domains important for autonomous activity. Mediates tubulin polyglutamylation which induces establishment of microtubule heterogeneity in sperm flagella, thereby playing a role in normal motile flagella axoneme structure and sperm flagella beating pattern. This chain is Probable tubulin polyglutamylase TTLL9, found in Mus musculus (Mouse).